The primary structure comprises 185 residues: Ribosome-recycling factor (185 aa).

This sequence belongs to the RRF family.

It localises to the cytoplasm. Responsible for the release of ribosomes from messenger RNA at the termination of protein biosynthesis. May increase the efficiency of translation by recycling ribosomes from one round of translation to another. The chain is Ribosome-recycling factor from Heliobacterium modesticaldum (strain ATCC 51547 / Ice1).